A 253-amino-acid polypeptide reads, in one-letter code: uncharacterized protein (253 aa).

Positions 1–16 (MCVVYRTSVLILLASG) are cleaved as a signal peptide. Cys-17 carries the N-palmitoyl cysteine lipid modification. Cys-17 carries the S-diacylglycerol cysteine lipid modification.

This sequence belongs to the staphylococcal tandem lipoprotein family.

It is found in the cell membrane. This is an uncharacterized protein from Staphylococcus aureus (strain N315).